A 200-amino-acid polypeptide reads, in one-letter code: dITP/XTP pyrophosphatase (200 aa).

Residue 7 to 12 coordinates substrate; sequence TSNKHK. Glutamate 38 and aspartate 73 together coordinate Mg(2+). Aspartate 73 serves as the catalytic Proton acceptor. Substrate contacts are provided by residues serine 74, 154 to 157, lysine 177, and 182 to 183; these read FGYD and HR.

The protein belongs to the HAM1 NTPase family. As to quaternary structure, homodimer. Requires Mg(2+) as cofactor.

It catalyses the reaction XTP + H2O = XMP + diphosphate + H(+). The enzyme catalyses dITP + H2O = dIMP + diphosphate + H(+). The catalysed reaction is ITP + H2O = IMP + diphosphate + H(+). Functionally, pyrophosphatase that catalyzes the hydrolysis of nucleoside triphosphates to their monophosphate derivatives, with a high preference for the non-canonical purine nucleotides XTP (xanthosine triphosphate), dITP (deoxyinosine triphosphate) and ITP. Seems to function as a house-cleaning enzyme that removes non-canonical purine nucleotides from the nucleotide pool, thus preventing their incorporation into DNA/RNA and avoiding chromosomal lesions. This Campylobacter jejuni subsp. jejuni serotype O:2 (strain ATCC 700819 / NCTC 11168) protein is dITP/XTP pyrophosphatase.